The chain runs to 520 residues: MSQLSLSWLGLWPVAASPWLLLLLVGASWLLAHVLAWTYAFYDNCRRLRCFPQPPRRNWFWGHQGMVNPTEEGMRVLTQLVATYPQGFKVWMGPISPLLSLCHPDIIRSVINASAAIAPKDKFFYSFLEPWLGDGLLLSAGDKWSRHRRMLTPAFHFNILKPYMKIFNESVNIMHAKWQLLASEGSACLDMFEHISLMTLDSLQKCVFSFDSHCQEKPSEYIAAILELSALVSKRHHEILLHIDFLYYLTPDGQRFRRACRLVHDFTDAVIQERRRTLPSQGVDDFLQAKAKSKTLDFIDVLLLSKDEDGKKLSDEDIRAEADTFMFEGHDTTASGLSWVLYHLAKHPEYQERCRQEVQELLKDREPKEIEWDDLAHLPFLTMCMKESLRLHPPVPVISRHVTQDIVLPDGRVIPKGIICLISVFGTHHNPAVWPDPEVYDPFRFDPENIKERSPLAFIPFSAGPRNCIGQTFAMAEMKVVLALTLLRFRVLPDHTEPRRKPELVLRAEGGLWLRVEPLS.

Positions 1–4 (MSQL) are excised as a propeptide. Heme-binding residues include E328 and C468.

The protein belongs to the cytochrome P450 family. Requires heme as cofactor. As to expression, liver. Also present in kidney: specifically expressed in the S2 and S3 segments of proximal tubules in cortex and outer medulla.

The protein resides in the microsome membrane. Its subcellular location is the endoplasmic reticulum membrane. It carries out the reaction an organic molecule + reduced [NADPH--hemoprotein reductase] + O2 = an alcohol + oxidized [NADPH--hemoprotein reductase] + H2O + H(+). The enzyme catalyses (5Z,8Z,11Z,14Z)-eicosatetraenoate + reduced [NADPH--hemoprotein reductase] + O2 = 20-hydroxy-(5Z,8Z,11Z,14Z)-eicosatetraenoate + oxidized [NADPH--hemoprotein reductase] + H2O + H(+). It catalyses the reaction (5Z,8Z,11Z)-eicosatrienoate + reduced [NADPH--hemoprotein reductase] + O2 = 20-hydroxy-(5Z,8Z,11Z)-eicosatrienoate + oxidized [NADPH--hemoprotein reductase] + H2O + H(+). The catalysed reaction is (5Z,8Z,11Z,14Z,17Z)-eicosapentaenoate + reduced [NADPH--hemoprotein reductase] + O2 = 20-hydroxy-(5Z,8Z,11Z,14Z,17Z)-eicosapentaenoate + oxidized [NADPH--hemoprotein reductase] + H2O + H(+). It carries out the reaction (4Z,7Z,10Z,13Z,16Z,19Z)-docosahexaenoate + reduced [NADPH--hemoprotein reductase] + O2 = 22-hydroxy-(4Z,7Z,10Z,13Z,16Z,19Z)-docosahexaenoate + oxidized [NADPH--hemoprotein reductase] + H2O + H(+). The enzyme catalyses 8,9-epoxy-(5Z,11Z,14Z)-eicosatrienoate + reduced [NADPH--hemoprotein reductase] + O2 = 20-hydroxy-8,9-epoxy-(5Z,11Z,14Z)-eicosatrienoate + oxidized [NADPH--hemoprotein reductase] + H2O + H(+). It catalyses the reaction (9S,10R)-epoxy-octadecanoate + reduced [NADPH--hemoprotein reductase] + O2 = 18-hydroxy-(9S,10R)-epoxy-octadecanoate + oxidized [NADPH--hemoprotein reductase] + H2O + H(+). The catalysed reaction is (9R,10S)-epoxy-octadecanoate + reduced [NADPH--hemoprotein reductase] + O2 = 18-hydroxy-(9R,10S)-epoxy-octadecanoate + oxidized [NADPH--hemoprotein reductase] + H2O + H(+). It carries out the reaction 12,13-epoxy-(9Z)-octadecenoate + reduced [NADPH--hemoprotein reductase] + O2 = 18-hydroxy-12,13-epoxy-(9Z)-octadecenoate + oxidized [NADPH--hemoprotein reductase] + H2O + H(+). The enzyme catalyses 9,10-epoxy-(12Z)-octadecenoate + reduced [NADPH--hemoprotein reductase] + O2 = 18-hydroxy-9,10-epoxy-(12Z)-octadecenoate + oxidized [NADPH--hemoprotein reductase] + H2O + H(+). It catalyses the reaction 8-hydroxy-(5Z,9E,11Z,14Z)-eicosatetraenoate + reduced [NADPH--hemoprotein reductase] + O2 = 8,20-dihydroxy-(5Z,9E,11Z,14Z)-eicosatetraenoate + oxidized [NADPH--hemoprotein reductase] + H2O + H(+). The catalysed reaction is 12-hydroxy-(5Z,8Z,10E,14Z)-eicosatetraenoate + reduced [NADPH--hemoprotein reductase] + O2 = 12,20-dihydroxy-(5Z,8Z,10E,14Z)-eicosatetraenoate + oxidized [NADPH--hemoprotein reductase] + H2O + H(+). It carries out the reaction 12-hydroxyoctadecanoate + reduced [NADPH--hemoprotein reductase] + O2 = 12,18-dihydroxyoctadecanoate + oxidized [NADPH--hemoprotein reductase] + H2O + H(+). The enzyme catalyses docosanoate + reduced [NADPH--hemoprotein reductase] + O2 = 22-hydroxydocosanoate + oxidized [NADPH--hemoprotein reductase] + H2O + H(+). It catalyses the reaction 22-hydroxydocosanoate + reduced [NADPH--hemoprotein reductase] + O2 = 22-oxodocosanoate + oxidized [NADPH--hemoprotein reductase] + 2 H2O + H(+). The catalysed reaction is 22-oxodocosanoate + reduced [NADPH--hemoprotein reductase] + O2 = docosanedioate + oxidized [NADPH--hemoprotein reductase] + H2O + 2 H(+). It carries out the reaction tetracosanoate + reduced [NADPH--hemoprotein reductase] + O2 = 24-hydroxytetracosanoate + oxidized [NADPH--hemoprotein reductase] + H2O + H(+). The enzyme catalyses hexacosanoate + reduced [NADPH--hemoprotein reductase] + O2 = 26-hydroxyhexacosanoate + oxidized [NADPH--hemoprotein reductase] + H2O + H(+). It catalyses the reaction 26-hydroxyhexacosanoate + reduced [NADPH--hemoprotein reductase] + O2 = 26-oxohexacosanoate + oxidized [NADPH--hemoprotein reductase] + 2 H2O + H(+). The catalysed reaction is 26-oxohexacosanoate + reduced [NADPH--hemoprotein reductase] + O2 = hexacosanedioate + oxidized [NADPH--hemoprotein reductase] + H2O + 2 H(+). It carries out the reaction 3-hydroxyoctadecanoate + reduced [NADPH--hemoprotein reductase] + O2 = 3,18-dihydroxyoctadecanoate + oxidized [NADPH--hemoprotein reductase] + H2O + H(+). The enzyme catalyses 3-hydroxyhexadecanoate + reduced [NADPH--hemoprotein reductase] + O2 = 3,16-dihydroxyhexadecanoate + oxidized [NADPH--hemoprotein reductase] + H2O + H(+). It catalyses the reaction leukotriene B4 + reduced [NADPH--hemoprotein reductase] + O2 = 20-hydroxy-leukotriene B4 + oxidized [NADPH--hemoprotein reductase] + H2O + H(+). The catalysed reaction is 6-trans-leukotriene B4 + reduced [NADPH--hemoprotein reductase] + O2 = 20-hydroxy-6-trans-leukotriene B4 + oxidized [NADPH--hemoprotein reductase] + H2O + H(+). It carries out the reaction lipoxin A4 + reduced [NADPH--hemoprotein reductase] + O2 = 20-hydroxy-lipoxin A4 + oxidized [NADPH--hemoprotein reductase] + H2O + H(+). The enzyme catalyses menaquinone-4 + reduced [NADPH--hemoprotein reductase] + O2 = omega-hydroxymenaquinone-4 + oxidized [NADPH--hemoprotein reductase] + H2O + H(+). It catalyses the reaction phylloquinone + reduced [NADPH--hemoprotein reductase] + O2 = omega-hydroxyphylloquinone + oxidized [NADPH--hemoprotein reductase] + H2O + H(+). The catalysed reaction is (+)-alpha-tocopherol + reduced [NADPH--hemoprotein reductase] + O2 = 13-hydroxy-alpha-tocopherol + oxidized [NADPH--hemoprotein reductase] + H2O + H(+). It carries out the reaction gamma-tocopherol + NADPH + O2 + H(+) = 13-hydroxy-gamma-tocopherol + NADP(+) + H2O. Its pathway is lipid metabolism; arachidonate metabolism. It functions in the pathway lipid metabolism; leukotriene B4 degradation. The protein operates within cofactor degradation; phylloquinone degradation. Its activity is regulated as follows. Inhibited by dietary sesamin. Its function is as follows. A cytochrome P450 monooxygenase involved in the metabolism of various endogenous substrates, including fatty acids, eicosanoids and vitamins. Mechanistically, uses molecular oxygen inserting one oxygen atom into a substrate, and reducing the second into a water molecule, with two electrons provided by NADPH via cytochrome P450 reductase (CPR; NADPH-ferrihemoprotein reductase). Catalyzes predominantly the oxidation of the terminal carbon (omega-oxidation) of long- and very long-chain fatty acids. Displays high omega-hydroxylase activity toward polyunsaturated fatty acids (PUFAs). Participates in the conversion of arachidonic acid to omega-hydroxyeicosatetraenoic acid (20-HETE), a signaling molecule acting both as vasoconstrictive and natriuretic with overall effect on arterial blood pressure. Plays a role in the oxidative inactivation of eicosanoids, including both pro-inflammatory and anti-inflammatory mediators such as leukotriene B4 (LTB4), lipoxin A4 (LXA4), and several HETEs. Catalyzes omega-hydroxylation of 3-hydroxy fatty acids. Converts monoepoxides of linoleic acid leukotoxin and isoleukotoxin to omega-hydroxylated metabolites. Contributes to the degradation of very long-chain fatty acids (VLCFAs) by catalyzing successive omega-oxidations and chain shortening. Plays an important role in vitamin metabolism by chain shortening. Catalyzes omega-hydroxylation of the phytyl chain of tocopherols (forms of vitamin E), with preference for gamma-tocopherols over alpha-tocopherols, thus promoting retention of alpha-tocopherols in tissues. Omega-hydroxylates and inactivates phylloquinone (vitamin K1), and menaquinone-4 (MK-4, a form of vitamin K2), both acting as cofactors in blood coagulation. This Homo sapiens (Human) protein is Cytochrome P450 4F2.